A 153-amino-acid chain; its full sequence is Satratoxin biosynthesis SC2 cluster transcription factor SAT15 (153 aa).

Its subcellular location is the nucleus. In terms of biological role, transcriptional regulator that may regulate the expression of the satratoxin biosynthesis SC2 cluster, one of the 3 clusters involved in the biosynthesis of satratoxins, trichothecene mycotoxins that are associated with human food poisonings. The sequence is that of Satratoxin biosynthesis SC2 cluster transcription factor SAT15 from Stachybotrys chartarum (strain CBS 109288 / IBT 7711) (Toxic black mold).